Here is a 701-residue protein sequence, read N- to C-terminus: Lutropin-choriogonadotropic hormone receptor (701 aa).

The first 26 residues, 1-26 (MGRPSLALRLLLALLLLPPPAPLLWA), serve as a signal peptide directing secretion. The Extracellular portion of the chain corresponds to 27-365 (LRPAPCPEPC…EDIMGYNFLR (339 aa)). The N-linked (GlcNAc...) asparagine glycan is linked to asparagine 101. LRR repeat units follow at residues 124–149 (LPRL…IFSS), 151–173 (FNFI…AFQG), 174–198 (MNNE…AFNG), 200–222 (TLIS…AFRG), 223–246 (ATGP…GLES), and 250–271 (LIAT…TNLL). Asparagine 176 and asparagine 197 each carry an N-linked (GlcNAc...) asparagine glycan. N-linked (GlcNAc...) asparagine glycosylation is found at asparagine 293, asparagine 301, and asparagine 315. Tyrosine 333 carries the post-translational modification Sulfotyrosine. A helical transmembrane segment spans residues 366–387 (VLIWLINILAITGNVTVLFVLL). The Cytoplasmic portion of the chain corresponds to 388–397 (TSRYKLTVPR). A helical membrane pass occupies residues 398 to 418 (FLMCNLSFADFCMGLYLLLIA). The Extracellular segment spans residues 419–441 (SVDAQTKGQYYNHAIDWQTGSGC). An intrachain disulfide couples cysteine 441 to cysteine 516. The helical transmembrane segment at 442 to 464 (SAAGFFTVFASELSVYTLTVITL) threads the bilayer. Over 465 to 484 (ERWHTITYAIQLDQKLRLKH) the chain is Cytoplasmic. The helical transmembrane segment at 485–507 (AIPVMLGGWLFSTLIAVLPLVGV) threads the bilayer. At 508 to 527 (SNYMKVSICLPMDVESTLSQ) the chain is on the extracellular side. The helical transmembrane segment at 528–551 (VYILTILILNVMAFIIICACYIKI) threads the bilayer. The Cytoplasmic segment spans residues 552 to 572 (YFAVQNPELMATNKDTKIAKK). Residues 573–596 (MAVLIFTDFTCMAPISFFAISAAF) form a helical membrane-spanning segment. Topologically, residues 597–607 (KVPLITVTNSK) are extracellular. The helical transmembrane segment at 608–629 (VLLVLFYPVNSCANPFLYAIFT) threads the bilayer. Topologically, residues 630–701 (KAFQRDFFLL…VLDKTCYKEC (72 aa)) are cytoplasmic. 2 S-palmitoyl cysteine lipidation sites follow: cysteine 645 and cysteine 646.

Belongs to the G-protein coupled receptor 1 family. FSH/LSH/TSH subfamily. In terms of processing, sulfated.

Its subcellular location is the cell membrane. Functionally, receptor for lutropin-choriogonadotropic hormone. The activity of this receptor is mediated by G proteins which activate adenylate cyclase. This Bos taurus (Bovine) protein is Lutropin-choriogonadotropic hormone receptor (LHCGR).